The sequence spans 354 residues: Interferon-inducible protein AIM2 (354 aa).

The Pyrin domain maps to 1 to 87; it reads MESEYREMLL…ANALEEKKKE (87 aa). Positions 95–124 are disordered; the sequence is NTKKRGTQKVENRSQAENCSAASATRSDND. Residues 109-120 are compositionally biased toward polar residues; it reads QAENCSAASATR. The HIN-200 domain occupies 144-341; the sequence is MVAEQEAIRE…SGPCSFFKVI (198 aa).

Belongs to the HIN-200 family. As to quaternary structure, self-associates; forms homooligomers in response to cytosolic double-stranded DNA (dsDNA) and the dsDNA seems to serve as oligomerization platform. Component of AIM2 inflammasome, which consists of a signal sensor component (AIM2), an adapter (PYCARD/ASC), which recruits an effector pro-inflammatory caspase (CASP1). Interacts (via pyrin domain) with PYCARD/ASC (via pyrin domain); interaction is direct. Component of the AIM2 PANoptosome complex, a multiprotein complex that drives inflammatory cell death (PANoptosis). Interacts with EIF2AK2/PKR. Interacts with MAPRE1. Interacts (via HIN-200 domain) with IFI202 (via HIN-200 domain 2); preventing activation of the AIM2 inflammasome. Interacts with RACK1; promoting association with PP2A phosphatase and dephosphorylation of AKT1. Interacts with TRIM11; promoting AIM2 recruitment to autophagosomes and autophagy-dependent degradation. Post-translationally, degraded via selective autophagy following interaction with TRIM11. Expressed in developing neurons. Highly expressed in regulatory T-cells (Treg).

The protein resides in the cytoplasm. Its subcellular location is the inflammasome. It is found in the nucleus. Its activity is regulated as follows. Inactive in absence of double-stranded DNA (dsDNA). Homooligomerizes upon binding to dsDNA, dsDNA serving as an oligomerization platform. AIM2 requires large dsDNA to generate a structural template that couples dsDNA ligand-binding and homooligomerization. Homooligomerization is followed by recruitment of PYCARD/ASC to initiate speck formation (nucleation). AIM2 and PYCARD/ASC homooligomer filaments assemble bidirectionally and the recognition between AIM2 and PYCARD/ASC oligomers occurs in a head-to-tail manner. Clustered PYCARD/ASC nucleates the formation of CASP1 filaments through the interaction of their respective CARD domains, acting as a platform for CASP1 polymerization and activation. Active CASP1 then specifically processes protein precursors, such as gasdermin-D (GSDMD), IL1B and IL18, leading to the release of mature cytokines in the extracellular milieu or pyroptosis, depending on cell type. AIM2 can be activated in response to events that cause genomic DNA (HIV protease inhibitor nelfinavir) or mitochondrial DNA release in the cytoplasm (such as Perfluoroalkyl substance pollutants or cholesterol overload). Activation of the AIM2 inflammasome is inhibited by IFI202. Activation of the AIM2 inflammasome is inhibited by TRIM11, which promotes autophagy-dependent degradation of AIM2. In terms of biological role, sensor component of the AIM2 inflammasome, which mediates inflammasome activation in response to the presence of double-stranded DNA (dsDNA) in the cytosol, leading to subsequent pyroptosis. Inflammasomes are supramolecular complexes that assemble in the cytosol in response to pathogens and other damage-associated signals and play critical roles in innate immunity and inflammation. Acts as a recognition receptor (PRR): specifically recognizes and binds dsDNA in the cytosol, and mediates the formation of the inflammasome polymeric complex composed of AIM2, CASP1 and PYCARD/ASC. Recruitment of pro-caspase-1 (proCASP1) to the AIM2 inflammasome promotes caspase-1 (CASP1) activation, which subsequently cleaves and activates inflammatory cytokines IL1B and IL18 and gasdermin-D (GSDMD), promoting cytokine secretion. In some cells, CASP1 activation mediates cleavage and activation of GSDMD, triggering pyroptosis without promoting cytokine secretion. Detects cytosolic dsDNA of viral and bacterial origin in a non-sequence-specific manner. Involved in the DNA damage response caused by acute ionizing radiation by mediating pyroptosis of intestinal epithelial cells and bone marrow cells in response to double-strand DNA breaks. Mechanistically, AIM2 senses DNA damage in the nucleus to mediate inflammasome assembly and inflammatory cell death. Also acts as a regulator of neurodevelopment via its role in the DNA damage response: acts by promoting neural cell death in response to DNA damage in the developing brain, thereby purging genetically compromised cells of the central nervous system. Pyroptosis mediated by the AIM2 inflammasome in response to DNA damage is dependent on GSDMD without involving IL1B and IL18 cytokine secretion. Also acts as a mediator of pyroptosis, necroptosis and apoptosis (PANoptosis), an integral part of host defense against pathogens, in response to bacterial infection. Can also trigger PYCARD/ASC-dependent, caspase-1-independent cell death that involves caspase-8 (CASP8). Functionally, also acts as a tumor suppressor independently of its role in inflammatory response. Able to suppress overt cell proliferation in enterocytes: restricts stem cell proliferation in the intestinal mucosa in an inflammasome-independent manner, contributing to a decrease in the likelihood of colorectal cancer development. AIM2 suppresses cell proliferation by inhibiting phosphorylation of AKT1 at 'Ser-473', preventing AKT1 activation and AKT-mTOR signaling pathway. Inhibits AKT1 phosphorylation both by inhibiting the activity of PRKDC/DNA-PK kinase and promoting dephosphorylation by PP2A phosphatase. Also acts as a key regulator of regulatory T-cells (Treg) homeostasis by promoting their stability: acts by preventing AKT1 activation. Its role in Treg homeostasis is important to restain autoimmune diseases. In Mus musculus (Mouse), this protein is Interferon-inducible protein AIM2.